The chain runs to 284 residues: Protease HtpX (284 aa).

A run of 2 helical transmembrane segments spans residues 4–24 and 33–53; these read ILLF…ILSL and MGLL…SLLM. Residue His139 coordinates Zn(2+). Glu140 is an active-site residue. His143 is a Zn(2+) binding site. Helical transmembrane passes span 147–167 and 187–207; these read GDMV…IFAA and IYFL…SMIA. Position 215 (Glu215) interacts with Zn(2+).

The protein belongs to the peptidase M48B family. Requires Zn(2+) as cofactor.

It localises to the cell inner membrane. The sequence is that of Protease HtpX from Mannheimia succiniciproducens (strain KCTC 0769BP / MBEL55E).